We begin with the raw amino-acid sequence, 190 residues long: Secreted isochorismatase effector Isc1 (190 aa).

Residues aspartate 26, lysine 100, and cysteine 133 contribute to the active site.

It belongs to the isochorismatase family.

It is found in the secreted. It localises to the host cytoplasm. Its subcellular location is the host nucleus. The enzyme catalyses isochorismate + H2O = (2S,3S)-2,3-dihydroxy-2,3-dihydrobenzoate + pyruvate. Functionally, secreted isochorismatase required for full virulence of V.dahliae. Suppresses salicylate-mediated innate immunity of the host by disrupting the plant salicylate metabolism pathway via hydrolysis of its isochorismate precursor. The protein is Secreted isochorismatase effector Isc1 of Verticillium dahliae (strain VdLs.17 / ATCC MYA-4575 / FGSC 10137) (Verticillium wilt).